A 195-amino-acid polypeptide reads, in one-letter code: Molybdenum cofactor guanylyltransferase (195 aa).

GTP contacts are provided by residues 10–12 (LAG), lysine 23, asparagine 51, aspartate 69, and aspartate 99. A Mg(2+)-binding site is contributed by aspartate 99.

Belongs to the MobA family. In terms of assembly, monomer. The cofactor is Mg(2+).

The protein localises to the cytoplasm. The catalysed reaction is Mo-molybdopterin + GTP + H(+) = Mo-molybdopterin guanine dinucleotide + diphosphate. In terms of biological role, transfers a GMP moiety from GTP to Mo-molybdopterin (Mo-MPT) cofactor (Moco or molybdenum cofactor) to form Mo-molybdopterin guanine dinucleotide (Mo-MGD) cofactor. The polypeptide is Molybdenum cofactor guanylyltransferase (Yersinia pestis bv. Antiqua (strain Antiqua)).